A 127-amino-acid polypeptide reads, in one-letter code: Fumarate reductase subunit C (127 aa).

3 helical membrane passes run 30 to 50 (ATVL…GCLV), 58 to 78 (GWLA…ALLG), and 107 to 127 (IIVL…LIVV).

It belongs to the FrdC family. As to quaternary structure, part of an enzyme complex containing four subunits: a flavoprotein (FrdA), an iron-sulfur protein (FrdB), and two hydrophobic anchor proteins (FrdC and FrdD).

It is found in the cell inner membrane. Functionally, anchors the catalytic components of the fumarate reductase complex to the cell membrane, binds quinones. The sequence is that of Fumarate reductase subunit C from Vibrio parahaemolyticus serotype O3:K6 (strain RIMD 2210633).